The primary structure comprises 2209 residues: Genome polyprotein (2209 aa).

G2 is lipidated: N-myristoyl glycine; by host. At 2–1520 (GAQVSSQKVG…NINRAMTILQ (1519 aa)) the chain is on the cytoplasmic side. The amphipathic alpha-helix stretch occupies residues 580-600 (GLGQMLESMIDNTVRETVGAA). Active-site for protease 2A activity residues include H901 and D919. The Zn(2+) site is built by C936 and C938. C990 (for protease 2A activity) is an active-site residue. Residues C996 and H998 each coordinate Zn(2+). The tract at residues 1128–1200 (GDSWLKKFTE…HQSCPSQEHQ (73 aa)) is membrane-binding. Residues 1128–1266 (GDSWLKKFTE…SPGTGKSVAT (139 aa)) are oligomerization. Residues 1149 to 1153 (SNKIS) are RNA-binding. The SF3 helicase domain maps to 1232-1388 (EHTINNYIQF…NEYSRDGKLN (157 aa)). 1256–1263 (GSPGTGKS) is an ATP binding site. Residues C1396, C1399, C1408, and C1413 each contribute to the Zn(2+) site. The C4-type zinc-finger motif lies at 1396-1413 (CKNCHQPANFKRCCPLVC). Residues 1440 to 1447 (ERNRRSNI) are RNA-binding. An oligomerization region spans residues 1451 to 1456 (MEALFQ). Residues 1521–1536 (AVTTFAAVAGVVYVMY) lie within the membrane without spanning it. Over 1537–2209 (KLFAGHQGAY…TLYRRWLDSF (673 aa)) the chain is Cytoplasmic. Position 1546 is an O-(5'-phospho-RNA)-tyrosine (Y1546). The Peptidase C3 domain occupies 1566–1744 (GPGFDYAVAM…FAAALKRSYF (179 aa)). Active-site for protease 3C activity residues include H1605, E1636, and C1712. One can recognise a RdRp catalytic domain in the interval 1975-2090 (EKLFAFDYTG…SYPHEVDASL (116 aa)). Mg(2+) is bound by residues D1981 and D2076.

The protein belongs to the picornaviruses polyprotein family. As to quaternary structure, interacts with capsid protein VP1 and capsid protein VP3 to form heterotrimeric protomers. Interacts with capsid protein VP0, and capsid protein VP3 to form heterotrimeric protomers. Interacts with human PVR. Five protomers subsequently associate to form pentamers which serve as building blocks for the capsid. Interacts with capsid protein VP2, capsid protein VP3 and capsid protein VP4 following cleavage of capsid protein VP0. In terms of assembly, interacts with capsid protein VP1 and capsid protein VP3 in the mature capsid. As to quaternary structure, interacts with capsid protein VP0 and capsid protein VP1 to form heterotrimeric protomers. Five protomers subsequently associate to form pentamers which serve as building blocks for the capsid. Interacts with capsid protein VP4 in the mature capsid. Interacts with protein 2C; this interaction may be important for virion morphogenesis. Interacts with capsid protein VP1 and capsid protein VP3. In terms of assembly, homodimer. As to quaternary structure, homohexamer; forms a hexameric ring structure with 6-fold symmetry characteristic of AAA+ ATPases. Interacts (via N-terminus) with host RTN3 (via reticulon domain); this interaction is important for viral replication. Interacts with capsid protein VP3; this interaction may be important for virion morphogenesis. Interacts with protein 3CD. In terms of assembly, homodimer. Interacts with host GBF1. Interacts (via GOLD domain) with host ACBD3 (via GOLD domain); this interaction allows the formation of a viral protein 3A/ACBD3 heterotetramer with a 2:2 stoichiometry, which will stimulate the recruitment of host PI4KB in order to synthesize PI4P at the viral RNA replication sites. As to quaternary structure, interacts with RNA-directed RNA polymerase. Interacts with protein 3AB and with RNA-directed RNA polymerase. In terms of assembly, interacts with Viral protein genome-linked and with protein 3CD. Mg(2+) is required as a cofactor. Specific enzymatic cleavages in vivo by the viral proteases yield processing intermediates and the mature proteins. In terms of processing, myristoylation is required for the formation of pentamers during virus assembly. Further assembly of 12 pentamers and a molecule of genomic RNA generates the provirion. Post-translationally, during virion maturation, immature virions are rendered infectious following cleavage of VP0 into VP4 and VP2. This maturation seems to be an autocatalytic event triggered by the presence of RNA in the capsid and it is followed by a conformational change infectious virion. Myristoylation is required during RNA encapsidation and formation of the mature virus particle. In terms of processing, VPg is uridylylated by the polymerase into VPg-pUpU. This acts as a nucleotide-peptide primer for the genomic RNA replication.

It is found in the virion. The protein localises to the host cytoplasm. It localises to the host cytoplasmic vesicle membrane. The protein resides in the host nucleus. It catalyses the reaction a ribonucleoside 5'-triphosphate + H2O = a ribonucleoside 5'-diphosphate + phosphate + H(+). The enzyme catalyses Selective cleavage of Tyr-|-Gly bond in the picornavirus polyprotein.. It carries out the reaction RNA(n) + a ribonucleoside 5'-triphosphate = RNA(n+1) + diphosphate. The catalysed reaction is Selective cleavage of Gln-|-Gly bond in the poliovirus polyprotein. In other picornavirus reactions Glu may be substituted for Gln, and Ser or Thr for Gly.. Its activity is regulated as follows. Replication or transcription is subject to high level of random mutations by the nucleotide analog ribavirin. Its function is as follows. Forms an icosahedral capsid of pseudo T=3 symmetry with capsid proteins VP2 and VP3. The capsid is 300 Angstroms in diameter, composed of 60 copies of each capsid protein and enclosing the viral positive strand RNA genome. Capsid protein VP1 mainly forms the vertices of the capsid. Capsid protein VP1 interacts with host cell receptor PVR to provide virion attachment to target host cells. This attachment induces virion internalization predominantly through clathrin- and caveolin-independent endocytosis in Hela cells and through caveolin-mediated endocytosis in brain microvascular endothelial cells. Tyrosine kinases are probably involved in the entry process. Virus binding to PVR induces increased junctional permeability and rearrangement of junctional proteins. Modulation of endothelial tight junctions, as well as cytolytic infection of endothelial cells themselves, may result in loss of endothelial integrity which may help the virus to reach the CNS. After binding to its receptor, the capsid undergoes conformational changes. Capsid protein VP1 N-terminus (that contains an amphipathic alpha-helix) and capsid protein VP4 are externalized. Together, they shape a pore in the host membrane through which viral genome is translocated to host cell cytoplasm. In terms of biological role, forms an icosahedral capsid of pseudo T=3 symmetry with capsid proteins VP2 and VP3. The capsid is 300 Angstroms in diameter, composed of 60 copies of each capsid protein and enclosing the viral positive strand RNA genome. Functionally, lies on the inner surface of the capsid shell. After binding to the host receptor, the capsid undergoes conformational changes. Capsid protein VP4 is released, Capsid protein VP1 N-terminus is externalized, and together, they shape a pore in the host membrane through which the viral genome is translocated into the host cell cytoplasm. Component of immature procapsids, which is cleaved into capsid proteins VP4 and VP2 after maturation. Allows the capsid to remain inactive before the maturation step. Its function is as follows. Cysteine protease that cleaves viral polyprotein and specific host proteins. It is responsible for the autocatalytic cleavage between the P1 and P2 regions, which is the first cleavage occurring in the polyprotein. Also cleaves the host translation initiation factor EIF4G1, in order to shut down the capped cellular mRNA translation. Inhibits the host nucleus-cytoplasm protein and RNA trafficking by cleaving host members of the nuclear pores including NUP98, NUP62 and NUP153. Counteracts stress granule formation probably by antagonizing its assembly or promoting its dissassembly. Cleaves and inhibits host IFIH1/MDA5, thereby inhibiting the type-I IFN production and the establishment of the antiviral state. Cleaves and inhibits host MAVS, thereby inhibiting the type-I IFN production and the establishment of the antiviral state. In terms of biological role, plays an essential role in the virus replication cycle by acting as a viroporin. Creates a pore in the host endoplasmic reticulum and as a consequence releases Ca2+ in the cytoplasm of infected cell. In turn, high levels of cytoplasmic calcium may trigger membrane trafficking and transport of viral ER-associated proteins to viroplasms, sites of viral genome replication. Functionally, induces and associates with structural rearrangements of intracellular membranes. Displays RNA-binding, nucleotide binding and NTPase activities. May play a role in virion morphogenesis and viral RNA encapsidation by interacting with the capsid protein VP3. Localizes the viral replication complex to the surface of membranous vesicles. Together with protein 3CD binds the Cis-Active RNA Element (CRE) which is involved in RNA synthesis initiation. Acts as a cofactor to stimulate the activity of 3D polymerase, maybe through a nucleid acid chaperone activity. Its function is as follows. Localizes the viral replication complex to the surface of membranous vesicles. It inhibits host cell endoplasmic reticulum-to-Golgi apparatus transport and causes the disassembly of the Golgi complex, possibly through GBF1 interaction. This would result in depletion of MHC, trail receptors and IFN receptors at the host cell surface. Plays an essential role in viral RNA replication by recruiting ACBD3 and PI4KB at the viral replication sites, thereby allowing the formation of the rearranged membranous structures where viral replication takes place. In terms of biological role, acts as a primer for viral RNA replication and remains covalently bound to viral genomic RNA. VPg is uridylylated prior to priming replication into VPg-pUpU. The oriI viral genomic sequence may act as a template for this. The VPg-pUpU is then used as primer on the genomic RNA poly(A) by the RNA-dependent RNA polymerase to replicate the viral genome. During genome replication, the VPg-RNA linkage is removed by the host TDP2, thereby accelerating replication. During the late stage of the replication cycle, host TDP2 is excluded from sites of viral RNA synthesis and encapsidation, allowing for the generation of progeny virions. Functionally, involved in the viral replication complex and viral polypeptide maturation. It exhibits protease activity with a specificity and catalytic efficiency that is different from protease 3C. Protein 3CD lacks polymerase activity. Protein 3CD binds to the 5'UTR of the viral genome. Major viral protease that mediates proteolytic processing of the polyprotein. Cleaves host EIF5B, contributing to host translation shutoff. Also cleaves host PABPC1, contributing to host translation shutoff. Cleaves host RIGI and thus contributes to the inhibition of type I interferon production. Cleaves host NLRP1, triggers host N-glycine-mediated degradation of the autoinhibitory NLRP1 N-terminal fragment. Inhibits the integrated stress response (ISR) in the infected cell by cleaving host G3BP1. Stress granule formation is thus inhibited, which allows protein synthesis and viral replication. Its function is as follows. Replicates the viral genomic RNA on the surface of intracellular membranes. May form linear arrays of subunits that propagate along a strong head-to-tail interaction called interface-I. Covalently attaches UMP to a tyrosine of VPg, which is used to prime RNA synthesis. The positive stranded RNA genome is first replicated at virus induced membranous vesicles, creating a dsRNA genomic replication form. This dsRNA is then used as template to synthesize positive stranded RNA genomes. ss(+)RNA genomes are either translated, replicated or encapsidated. The sequence is that of Genome polyprotein from Homo sapiens (Human).